The sequence spans 550 residues: MKSRLQAFKQFTRFVSCKSCGVELQSKNPSVTGYYKPPRAVRKDAGTIEDLKYLMFTQELQLKKHEIGLLDPDTDPDYKEPIPKRLVCKRCVDAISHNRYNSSDFPIHSFNDIKGALPHAANVYHVVSLSDFPLSLDKTILAEKNNRNYLLLSKADQITYKSSMLPHKGSAFFAEFCRRHIGVHVKKVVLFSNPRNWNIPSVINALAKRCYLLGNPNVGKTSLINSLLHEKSTSFQAQLDKRGNVIGPPKGHEQIQSTRRRAIFNEGGVSHIPNFTRTMQTYLIEDKVVNDLPGYTMDPTKVSDLANYIEKETLDNIRKTSKFKIDKLIKQNYTSLTGSKTGKCLSFGGIFHLVPPNSTINQVVNYIPLPEHEFSNVEKAVSLSLEVLQSENHSLRQFFALKKPFTDIKMFDRHVIPPFNGAIEIVLKDIGYFQVKPTGKYGFNGLYELWVPKGIRVCIREPLSKLISKSYEKYIESGDIADVCPTDRPLISDTYIMNHTEEDTFARMREMYINRTSKDILSRRLLQKDPNDIVGTLQSPPSNLYWYYKW.

A mitochondrion-targeting transit peptide spans 1 to 43 (MKSRLQAFKQFTRFVSCKSCGVELQSKNPSVTGYYKPPRAVRK). A CP-type G domain is found at 107-298 (IHSFNDIKGA…VNDLPGYTMD (192 aa)).

The protein belongs to the TRAFAC class YlqF/YawG GTPase family. GEP3 subfamily.

Its subcellular location is the mitochondrion. Functionally, may be involved in the mitochondrial lipid metabolism. In Kluyveromyces lactis (strain ATCC 8585 / CBS 2359 / DSM 70799 / NBRC 1267 / NRRL Y-1140 / WM37) (Yeast), this protein is Genetic interactor of prohibitins 3, mitochondrial (GEP3).